A 201-amino-acid polypeptide reads, in one-letter code: MATRPSSLVDSLEDEEDPQTLRRERPGSPRPRKVPRNALTQPVDQLLKDLRKNPSMISDPDQRTGREQLSNDELIKKLVTELAENSMIEAEEVRGTLGDISARIEAGFESLSALQVETIQTAQRCDHSDSIRILGENIKILDRSMKTMMETMKLMMEKVDLLYASTAVGTSAPMLPSHPAPPRIYPQLPSAPTTDEWDIIP.

Disordered regions lie at residues 1 to 70 (MATR…EQLS) and 176 to 201 (PSHPAPPRIYPQLPSAPTTDEWDIIP). Short sequence motifs (nuclear localization signal) lie at residues 29–36 (PRPRKVPR) and 181–193 (PPRIYPQLPSAPT).

As to quaternary structure, homomultimer; only active in its oligomeric state. Interacts with nucleoprotein/N. Interacts with matrix/M protein. Interacts with host TBK1. Interacts with polymerase L. Interacts with host HMGB1; this interaction is required to stabilize RNP on chromosomes. Phosphorylated by host PKC epsilon and casein kinase II.

Its subcellular location is the host nucleus. It localises to the host cytoplasm. In terms of biological role, essential component of the RNA polymerase transcription and replication complex. Acts as a scaffold which brings L in close proximity to the N-RNA complex. Plays a role in the segregation of the viral genome in host daughter cells during mitosis by interacting with host HMGB1, a host chromatin-remodeling DNA architectural protein, thereby stabilizing RNP on chromosomes. Interacts with host TBK1 and thus interferes with activation of cellular antiviral state. Inhibits cellular histone acetyltransferase activities. The chain is Phosphoprotein (P/X) from Bos taurus (Bovine).